Here is a 475-residue protein sequence, read N- to C-terminus: 3-hydroxyacyl-CoA dehydrogenase-like protein LAM1 (475 aa).

An NAD(+)-binding site is contributed by 99–104; sequence GTRPFA. Lysine 149 is a binding site for CoA. Asparagine 245 is an NAD(+) binding site.

It belongs to the 3-hydroxyacyl-CoA dehydrogenase family.

It functions in the pathway mycotoxin biosynthesis. Its function is as follows. 3-hydroxyacyl-CoA dehydrogenase-like protein; part of the Tox1A locus, one of the 2 loci that mediate the biosynthesis of T-toxin, a family of linear polyketides 37 to 45 carbons in length, of which the major component is 41 carbons, and which leads to high virulence to maize. One of the PKSs (PKS1 or PKS2) could synthesize a precursor, used subsequently by the other PKS as starter unit, to add additional carbons. Variability in the length of the final carbon backbone C35-47 could be achieved by varying the number of condensation cycles, or use of different starter or extender units or might be due to decarboxylation of the penultimate product, catalyzed by DEC1. Additional proteins are required for the biosynthesis of T-toxin, including oxidoreductases RED1, RED2, RED3, LAM1 and OXI1, as well as esterase TOX9. The protein is 3-hydroxyacyl-CoA dehydrogenase-like protein LAM1 of Cochliobolus heterostrophus (strain C4 / ATCC 48331 / race T) (Southern corn leaf blight fungus).